The sequence spans 214 residues: MKAFTQHTGLVAPLDRANVDTDQIIPKQFLKSIKRTGFGPNLFDEWRYLDVGQPYQDNSKRPVNQEFVLNHARYQGASVLLARENFGCGSSREHAPWALDEYGFRSIIAPSFADIFFNNSFKNGLLPIILSDEEVDELFKQVEANPGYQLTIDLQAQAVTRPDGKVLHFEIDAFRKHCLLNGLDDIGLTLQDSDAIKAFEGKHRAGQPWLFRDA.

The protein belongs to the LeuD family. LeuD type 1 subfamily. Heterodimer of LeuC and LeuD.

It carries out the reaction (2R,3S)-3-isopropylmalate = (2S)-2-isopropylmalate. The protein operates within amino-acid biosynthesis; L-leucine biosynthesis; L-leucine from 3-methyl-2-oxobutanoate: step 2/4. Functionally, catalyzes the isomerization between 2-isopropylmalate and 3-isopropylmalate, via the formation of 2-isopropylmaleate. The protein is 3-isopropylmalate dehydratase small subunit of Pseudomonas putida (strain GB-1).